Reading from the N-terminus, the 379-residue chain is GDSL esterase/lipase At3g05180 (379 aa).

An N-terminal signal peptide occupies residues 1–27 (METLFHTLLRLLLFVAISHTLSPLAGS). The Nucleophile role is filled by Ser-43. 2 N-linked (GlcNAc...) asparagine glycosylation sites follow: Asn-294 and Asn-330. Active-site residues include Asp-349 and His-352.

This sequence belongs to the 'GDSL' lipolytic enzyme family.

It is found in the secreted. The chain is GDSL esterase/lipase At3g05180 from Arabidopsis thaliana (Mouse-ear cress).